The primary structure comprises 266 residues: Auxin-responsive protein IAA21 (266 aa).

The EAR-like (transcriptional repression) motif lies at 24-28 (LRLGL). Residues 27–50 (GLPGTAEEAESEGGGGGGTDAAPL) form a disordered region. The PB1 domain maps to 146 to 248 (CLYVKVSMDG…SCRRLRIMKG (103 aa)).

Belongs to the Aux/IAA family. As to quaternary structure, homodimers and heterodimers. In terms of tissue distribution, highly expressed in flowers. Expressed in roots and seedlings.

Its subcellular location is the nucleus. Functionally, aux/IAA proteins are short-lived transcriptional factors that function as repressors of early auxin response genes at low auxin concentrations. The protein is Auxin-responsive protein IAA21 (IAA21) of Oryza sativa subsp. japonica (Rice).